A 342-amino-acid chain; its full sequence is Holliday junction branch migration complex subunit RuvB (342 aa).

Residues 1-179 are large ATPase domain (RuvB-L); it reads MTSILSPEKS…FGIPMRLNFY (179 aa). ATP-binding positions include L18, R19, G60, K63, T64, T65, 126–128, R169, Y179, and R216; that span reads EDF. Position 64 (T64) interacts with Mg(2+). The segment at 180–250 is small ATPAse domain (RuvB-S); sequence NTEELKKVLN…IANFGLNRLE (71 aa). The tract at residues 253–342 is head domain (RuvB-H); the sequence is IIGLDSNDYR…HQFNIFNDNE (90 aa). The DNA site is built by R289, R308, and R313.

It belongs to the RuvB family. Homohexamer. Forms an RuvA(8)-RuvB(12)-Holliday junction (HJ) complex. HJ DNA is sandwiched between 2 RuvA tetramers; dsDNA enters through RuvA and exits via RuvB. An RuvB hexamer assembles on each DNA strand where it exits the tetramer. Each RuvB hexamer is contacted by two RuvA subunits (via domain III) on 2 adjacent RuvB subunits; this complex drives branch migration. In the full resolvosome a probable DNA-RuvA(4)-RuvB(12)-RuvC(2) complex forms which resolves the HJ.

The protein resides in the cytoplasm. The enzyme catalyses ATP + H2O = ADP + phosphate + H(+). In terms of biological role, the RuvA-RuvB-RuvC complex processes Holliday junction (HJ) DNA during genetic recombination and DNA repair, while the RuvA-RuvB complex plays an important role in the rescue of blocked DNA replication forks via replication fork reversal (RFR). RuvA specifically binds to HJ cruciform DNA, conferring on it an open structure. The RuvB hexamer acts as an ATP-dependent pump, pulling dsDNA into and through the RuvAB complex. RuvB forms 2 homohexamers on either side of HJ DNA bound by 1 or 2 RuvA tetramers; 4 subunits per hexamer contact DNA at a time. Coordinated motions by a converter formed by DNA-disengaged RuvB subunits stimulates ATP hydrolysis and nucleotide exchange. Immobilization of the converter enables RuvB to convert the ATP-contained energy into a lever motion, pulling 2 nucleotides of DNA out of the RuvA tetramer per ATP hydrolyzed, thus driving DNA branch migration. The RuvB motors rotate together with the DNA substrate, which together with the progressing nucleotide cycle form the mechanistic basis for DNA recombination by continuous HJ branch migration. Branch migration allows RuvC to scan DNA until it finds its consensus sequence, where it cleaves and resolves cruciform DNA. This is Holliday junction branch migration complex subunit RuvB from Rickettsia bellii (strain RML369-C).